The chain runs to 481 residues: GTPase Obg (481 aa).

The Obg domain maps to 2–159 (TTFVDRVVLH…IDVVLELKSV (158 aa)). One can recognise an OBG-type G domain in the interval 160-330 (ADVGLVGYPS…LMYAMGELVT (171 aa)). GTP is bound by residues 166–173 (GYPSAGKS), 191–195 (FTTLV), 212–215 (DVPG), 282–285 (NKVD), and 311–313 (SAA). Ser-173 and Thr-193 together coordinate Mg(2+). Residues 348 to 426 (PKAVDDAGFT…IGEREFDWQP (79 aa)) form the OCT domain. Residues 439-452 (GDQRLAEKSERPSA) show a composition bias toward basic and acidic residues. Residues 439–481 (GDQRLAEKSERPSATERLAARKARRQRPEDEAEADEPVGDGEE) form a disordered region. Acidic residues predominate over residues 468–481 (DEAEADEPVGDGEE).

This sequence belongs to the TRAFAC class OBG-HflX-like GTPase superfamily. OBG GTPase family. As to quaternary structure, monomer. Mg(2+) is required as a cofactor.

Its subcellular location is the cytoplasm. In terms of biological role, an essential GTPase which binds GTP, GDP and possibly (p)ppGpp with moderate affinity, with high nucleotide exchange rates and a fairly low GTP hydrolysis rate. Plays a role in control of the cell cycle, stress response, ribosome biogenesis and in those bacteria that undergo differentiation, in morphogenesis control. The chain is GTPase Obg from Salinispora tropica (strain ATCC BAA-916 / DSM 44818 / JCM 13857 / NBRC 105044 / CNB-440).